We begin with the raw amino-acid sequence, 507 residues long: MLSKYELIKPDIGSSHGNITKVYEIVGGKPLRGQVKVSGSKNAALPVLAASLLCKEPLQLTNLPKILDVTNMIQCMEALGKRFEFINTNTIKIGNREMDTLTIPKEAARQIRASIILLGPLVAQYPKVILPLPGGCSIGKRPIDLHISALNALGVDIVELPDCLVCSRRYARLQGNTINFSIKTVTGTENAMMAAVLAEGTTIINNAAMEPEIVDLANFLNRLGAKINGGGSDRITISGVDKLNSCGSYSIMADRIEAGTYLVAAAMTRGSISVKGVNPDYLVAVLSELKCAGAKITCDSDSIQLDMGEEYGESLNITTKPYPGFPTDLQSLFLSLTCVLRGNSYLCETLFEDRFQIVQELKKMGANISLKDNTAHIKGVSRLRGSQVNATDLRSGAALVCASLAAEGITQIFAIEHIERGYEDLILKLKALGANIKLIENTHVTSTELSDSHFKEATSSETRIQRASLIETIVTPSITTFGQFKRVPTGEVTELEKQQTPYLHHIM.

A phosphoenolpyruvate-binding site is contributed by 41-42 (KN). Arginine 112 contacts UDP-N-acetyl-alpha-D-glucosamine. Catalysis depends on cysteine 136, which acts as the Proton donor. Cysteine 136 is subject to 2-(S-cysteinyl)pyruvic acid O-phosphothioketal. UDP-N-acetyl-alpha-D-glucosamine contacts are provided by residues 141–145 (RPIDL), aspartate 328, and leucine 350.

It belongs to the EPSP synthase family. MurA subfamily.

It localises to the cytoplasm. It catalyses the reaction phosphoenolpyruvate + UDP-N-acetyl-alpha-D-glucosamine = UDP-N-acetyl-3-O-(1-carboxyvinyl)-alpha-D-glucosamine + phosphate. It participates in cell wall biogenesis; peptidoglycan biosynthesis. In terms of biological role, cell wall formation. Adds enolpyruvyl to UDP-N-acetylglucosamine. The polypeptide is UDP-N-acetylglucosamine 1-carboxyvinyltransferase 1 (Legionella pneumophila (strain Lens)).